A 337-amino-acid polypeptide reads, in one-letter code: Oxidoreductase andH (337 aa).

Belongs to the NmrA-type oxidoreductase family.

The protein operates within secondary metabolite biosynthesis; terpenoid biosynthesis. Its function is as follows. Oxidoreductase; part of the gene cluster that mediates the biosynthesis of anditomin, a fungal meroterpenoid. The first step of the pathway is the synthesis of 3,5-dimethylorsellinic acid (DMOA) by the polyketide synthase andM. DMOA is then converted to the phthalide compound 5,7-dihydroxy-4,6-dimethylphthalide (DHDMP) by the cytochrome P450 monooxygenase andK, which is further prenylated by the prenyltransferase andD to yield farnesyl-DHDMP. Further epoxidation by the FAD-dependent monooxygenase andE leads to epoxyfarnesyl-DHDMP. The next step involves the terpene cyclase andB that converts epoxyfarnesyl-DHDMP into preandiloid A through opening of the epoxide ring followed by the cyclization of the farnesyl moiety. Preandiloid A is in turn oxidized at the C-3 hydroxyl group to yield preandiloid B by the dehydrogenase andC. The dioxygenase andA is solely responsible for the dehydrogenation of preandiloid B leading to the enone preandiloid C, as well as for the intriguing structural rearrangement to generate the bicyclo[2.2.2]octane core, transforming preandiloid C into andiconin. FAD-binding monooxygenase andJ then produces andilesin D which is reduced by dehydrogenase andI to yield andilesin A. Action of acetyltransferase andG followed by a spontaneous acetate elimination leads then to andilesin B, which is in turn substrate of the short chain dehydrogenase andH to yield andilesin C. Finally, the dioxygenase andF catalyzes the transformation of andilesin C to anditomin. This is Oxidoreductase andH from Emericella variicolor (Aspergillus stellatus).